The sequence spans 198 residues: Recombination protein RecR (198 aa).

The C4-type zinc-finger motif lies at cysteine 56–cysteine 71. In terms of domain architecture, Toprim spans glycine 79–proline 174.

Belongs to the RecR family.

Functionally, may play a role in DNA repair. It seems to be involved in an RecBC-independent recombinational process of DNA repair. It may act with RecF and RecO. The polypeptide is Recombination protein RecR (Tropheryma whipplei (strain TW08/27) (Whipple's bacillus)).